A 279-amino-acid polypeptide reads, in one-letter code: MLMSMGFVVAAFYRFVHLHNYYDMRSVILEFCQEHGIKGTVILAEQGINATISGERDAINKFFSFLDLDHRLADMKYHESYSSRLPFSKMKVRLKKEVVRLGIDDFDCSSMRGEYVDPKAWNDLITKPGMHVIDTRNDYEIKFGRFKHSINPGTTSFREFPDWARKWAEGKDKDVGVAMYCTGGIRCEKSTAFLKSLGFENVYHLKGGILNYLQSVKGADSLWEGDCFVFDERVAVDNNIAPSEDIKCVKCFGKVDEADLRSVSKGHIVCGACKSADVS.

The region spanning 126–221 is the Rhodanese domain; it reads TKPGMHVIDT…YLQSVKGADS (96 aa). Catalysis depends on cysteine 181, which acts as the Cysteine persulfide intermediate.

Belongs to the TrhO family.

It carries out the reaction uridine(34) in tRNA + AH2 + O2 = 5-hydroxyuridine(34) in tRNA + A + H2O. Functionally, catalyzes oxygen-dependent 5-hydroxyuridine (ho5U) modification at position 34 in tRNAs. The sequence is that of tRNA uridine(34) hydroxylase from Anaplasma phagocytophilum (strain HZ).